Consider the following 56-residue polypeptide: PI-stichotoxin-Hcr2a (56 aa).

In terms of domain architecture, BPTI/Kunitz inhibitor spans 4–54 (CLEPKVVGPCTAYFPRFYFDSETGKCTPFIYGGCEGNSYVDEKLHACRAIC). Disulfide bonds link Cys-4–Cys-54, Cys-13–Cys-37, and Cys-29–Cys-50.

Belongs to the venom Kunitz-type family. Sea anemone type 2 potassium channel toxin subfamily.

It is found in the secreted. The protein localises to the nematocyst. Its function is as follows. Serine protease inhibitor that acts on trypsin. The polypeptide is PI-stichotoxin-Hcr2a (Radianthus crispa (Leathery sea anemone)).